The primary structure comprises 950 residues: F-box only protein 10 (950 aa).

The region spanning 1–48 is the F-box domain; that stretch reads METGGLPLELWRMILAYLHLPDLGRCSLVCRAWYELILSLDSTRWRQL. PbH1 repeat units follow at residues 198–217 and 238–260; these read SGHIQFDNCNFENGHIQVHG and VPLCMLENCEFVGSENNCVTVEG. The disordered stretch occupies residues 313–364; that stretch reads IEGSQSPTSPVCSSPKPGSKEAEVGSDGERVAQTPDSSDGGLSPSGEDEDDE. Residues 315–324 are compositionally biased toward polar residues; the sequence is GSQSPTSPVC. A phosphoserine mark is found at S321 and S326. A compositionally biased stretch (basic and acidic residues) spans 330–342; that stretch reads GSKEAEVGSDGER. The span at 347-357 shows a compositional bias: low complexity; that stretch reads PDSSDGGLSPS. PbH1 repeat units lie at residues 423 to 444, 467 to 489, 490 to 512, 513 to 535, 536 to 558, 559 to 581, 582 to 604, 605 to 627, 628 to 650, 651 to 673, 713 to 735, 736 to 758, 760 to 782, 783 to 805, and 828 to 850; these read VQGCLIRKCLFRDGKGGVFVCS, NSKIVMLRNDIYRCRASGIFLRL, EGGGLIAGNNIYHNAEAGVDIRK, KSNPLILCNQIHHGLRSGIVVLG, NGKGVIRNNQIFSNKEAGIYILY, HGNPIVSGNHIFKGRAAGIAVNE, NGKGLITENVIRENQWGGVDIRR, GGVPILRSNLICFGYSDGVVVGD, EGKGLIEGNTIYANKGCGVWMMS, SSLPHVTSNHVSYNGLYGVAVFS, ITVALVESNSINHNGASGIFVQS, SEALQVVANVIHANGDRGITIVQ, SQLTRVANNSISCNRQSGVKVEF, QCKVELRGNGIYDNRGHGIITKG, and RSDTKVLKNRIHSFRAYGIAVRG.

In terms of assembly, component of the SCF(FBXO10) complex consisting of CUL1, SKP1 and FBXO10. Interacts with BCL2. Interacts with PRDM1. Particularly highly expressed in B-cells.

It is found in the cytoplasm. It participates in protein modification; protein ubiquitination. In terms of biological role, substrate-recognition component of the SCF (SKP1-CUL1-F-box protein)-type E3 ubiquitin ligase complex. Mediates the ubiquitination and degradation of BCL2, an antiapoptotic protein, thereby playing a role in apoptosis by controlling the stability of BCL2. Targets also the receptor for advanced glycation end products RAGE for ubiquitination and subsequent lysosomal degradation. Directly controls HGAL/GCSAM ubiquitination and degradation and thereby decreases BCR signaling. In Mus musculus (Mouse), this protein is F-box only protein 10 (Fbxo10).